Reading from the N-terminus, the 92-residue chain is Putative defensin-like protein 225 (92 aa).

An N-terminal signal peptide occupies residues methionine 1–alanine 26. 3 disulfide bridges follow: cysteine 32/cysteine 92, cysteine 42/cysteine 70, and cysteine 68/cysteine 88.

Belongs to the DEFL family.

It localises to the secreted. The chain is Putative defensin-like protein 225 (SCRL1) from Arabidopsis thaliana (Mouse-ear cress).